Here is a 953-residue protein sequence, read N- to C-terminus: TPR repeat-containing protein ZIP4 (953 aa).

The TPR 1 repeat unit spans residues Ala129 to Ala162. The tract at residues Ala248 to Pro269 is disordered. TPR repeat units lie at residues His432–Asp465 and Ala473–Ile506. The disordered stretch occupies residues Arg924–Val953. A compositionally biased stretch (polar residues) spans Ile943–Val953.

Its subcellular location is the nucleus. The protein localises to the chromosome. Required for crossover formation, complete synapsis of homologous chromosomes and bivalent formation during meiosis. Is specific to recombination events resulting in interference-sensitive crossovers (class I meiotic crossover) and works cooperatively with MER3 to promote crossovers. This Oryza sativa subsp. indica (Rice) protein is TPR repeat-containing protein ZIP4.